Consider the following 124-residue polypeptide: MEYEFRRNSLTGTFLASFSMDHEVLGQWFSEELGPELAKIQQVLDIIKEIQSGKRDSWRLIGKDFSLDLDEEQARIYANALGFEQDYELEEAMSLYDAESEAYCGLEDLEEALLSWYKFVQKGL.

This sequence belongs to the UPF0231 family.

The protein is UPF0231 protein SO_3983 of Shewanella oneidensis (strain ATCC 700550 / JCM 31522 / CIP 106686 / LMG 19005 / NCIMB 14063 / MR-1).